Here is a 494-residue protein sequence, read N- to C-terminus: Lysine--tRNA ligase (494 aa).

Residues Glu-407 and Glu-414 each coordinate Mg(2+).

It belongs to the class-II aminoacyl-tRNA synthetase family. As to quaternary structure, homodimer. Requires Mg(2+) as cofactor.

The protein resides in the cytoplasm. The catalysed reaction is tRNA(Lys) + L-lysine + ATP = L-lysyl-tRNA(Lys) + AMP + diphosphate. The sequence is that of Lysine--tRNA ligase from Lactococcus lactis subsp. cremoris (strain SK11).